We begin with the raw amino-acid sequence, 197 residues long: Ion-translocating oxidoreductase complex subunit B (197 aa).

The segment at 1–26 is hydrophobic; sequence MSTILIAIIALAALAAVFGAILGFAS. The region spanning 32–90 is the 4Fe-4S domain; the sequence is EADPIVDQIDSILPQTQCGQCGYPGCRPYAEAIANGDQINKCPPGGQATIEKLADLMGV. The [4Fe-4S] cluster site is built by Cys49, Cys52, Cys57, Cys73, Cys114, Cys117, Cys120, Cys124, Cys144, Cys147, Cys150, and Cys154. 4Fe-4S ferredoxin-type domains are found at residues 105 to 134 and 135 to 164; these read TVAF…GGTK and ALHT…MIPV.

Belongs to the 4Fe4S bacterial-type ferredoxin family. RnfB subfamily. The complex is composed of six subunits: RnfA, RnfB, RnfC, RnfD, RnfE and RnfG. The cofactor is [4Fe-4S] cluster.

Its subcellular location is the cell inner membrane. Functionally, part of a membrane-bound complex that couples electron transfer with translocation of ions across the membrane. The sequence is that of Ion-translocating oxidoreductase complex subunit B from Vibrio campbellii (strain ATCC BAA-1116).